The following is a 50-amino-acid chain: Sperm protamine P1 (50 aa).

Disulfide bonds link cysteine 7/cysteine 15 and cysteine 38/cysteine 46.

It belongs to the protamine P1 family. As to quaternary structure, cross-linked by interchain disulfide bonds around the DNA-helix. In terms of tissue distribution, testis.

Its subcellular location is the nucleus. It localises to the chromosome. Functionally, protamines substitute for histones in the chromatin of sperm during the haploid phase of spermatogenesis. They compact sperm DNA into a highly condensed, stable and inactive complex. The sequence is that of Sperm protamine P1 (PRM1) from Equus asinus (Donkey).